The following is a 29-amino-acid chain: U-limacoditoxin(12)-Dv72 (29 aa).

An N-terminal signal peptide occupies residues Met1 to Cys15. Residue Asn27 is modified to Asparagine amide.

It belongs to the limacoditoxin-12 family. Expressed by the venom secretory cell of the spine. The spine is a cuticular structure containing a single large nucleated venom-secreting cell at its base. It is an independent unit capable of producing, storing and injecting venom. On the back of D.vulnerans caterpillars, spines are grouped together by 50 to 100 to form scoli, of which there are eight in D.vulnerans.

The protein localises to the secreted. Probable toxin. Does not show insecticidal, antimicrobial and antiparasitic activities. Does not induce increase in intracellular calcium in mouse DRG neurons, suggesting that it does not induce pain. This chain is U-limacoditoxin(12)-Dv72, found in Doratifera vulnerans (Mottled cup moth).